The following is a 1221-amino-acid chain: A disintegrin and metalloproteinase with thrombospondin motifs 18 (1221 aa).

Positions methionine 1 to alanine 47 are cleaved as a signal peptide. The propeptide occupies serine 48–arginine 284. 2 N-linked (GlcNAc...) asparagine glycosylation sites follow: asparagine 151 and asparagine 190. Residues histidine 252 to lysine 259 carry the Cysteine switch motif. Residue cysteine 254 participates in Zn(2+) binding. Positions lysine 258 to lysine 291 are disordered. Over residues proline 265 to glutamate 275 the composition is skewed to basic and acidic residues. Residues leucine 293 to proline 498 form the Peptidase M12B domain. N-linked (GlcNAc...) asparagine glycosylation occurs at asparagine 313. Cystine bridges form between cysteine 369-cysteine 420, cysteine 395-cysteine 402, cysteine 414-cysteine 493, cysteine 453-cysteine 477, cysteine 521-cysteine 546, cysteine 532-cysteine 553, cysteine 541-cysteine 572, cysteine 566-cysteine 577, cysteine 601-cysteine 638, cysteine 605-cysteine 643, and cysteine 616-cysteine 628. Position 436 (histidine 436) interacts with Zn(2+). Glutamate 437 is a catalytic residue. Residues histidine 440 and histidine 446 each contribute to the Zn(2+) site. The Disintegrin domain maps to proline 498 to cysteine 577. The 56-residue stretch at histidine 589–asparagine 644 folds into the TSP type-1 1 domain. Asparagine 745, asparagine 838, and asparagine 909 each carry an N-linked (GlcNAc...) asparagine glycan. A spacer region spans residues phenylalanine 750 to tyrosine 876. TSP type-1 domains follow at residues cysteine 931–alanine 990, cysteine 991–proline 1049, serine 1052–proline 1116, and methionine 1123–proline 1178. Positions glutamate 1184 to isoleucine 1221 constitute a PLAC domain.

Zn(2+) serves as cofactor. In terms of processing, the precursor is cleaved by a furin endopeptidase. Glycosylated. Can be O-fucosylated by POFUT2 on a serine or a threonine residue found within the consensus sequence C1-X(2)-(S/T)-C2-G of the TSP type-1 repeat domains where C1 and C2 are the first and second cysteine residue of the repeat, respectively. Fucosylated repeats can then be further glycosylated by the addition of a beta-1,3-glucose residue by the glucosyltransferase, B3GALTL. Fucosylation mediates the efficient secretion of ADAMTS family members. Can also be C-glycosylated with one or two mannose molecules on tryptophan residues within the consensus sequence W-X-X-W of the TPRs, and N-glycosylated. These other glycosylations can also facilitate secretion. As to expression, expressed in fetal lung, liver, and kidney and in adult brain, prostate, submaxillary gland, and endothelium.

The protein localises to the secreted. It localises to the extracellular space. Its subcellular location is the extracellular matrix. This is A disintegrin and metalloproteinase with thrombospondin motifs 18 (ADAMTS18) from Homo sapiens (Human).